The primary structure comprises 209 residues: Small ribosomal subunit protein uS4 (209 aa).

The S4 RNA-binding domain occupies 98 to 164 (RRLDNVVYRL…LPVKNAIELN (67 aa)).

The protein belongs to the universal ribosomal protein uS4 family. In terms of assembly, part of the 30S ribosomal subunit. Contacts protein S5. The interaction surface between S4 and S5 is involved in control of translational fidelity.

One of the primary rRNA binding proteins, it binds directly to 16S rRNA where it nucleates assembly of the body of the 30S subunit. In terms of biological role, with S5 and S12 plays an important role in translational accuracy. In Thermosipho africanus (strain TCF52B), this protein is Small ribosomal subunit protein uS4.